Reading from the N-terminus, the 145-residue chain is 3-dehydroquinate dehydratase (145 aa).

Residue Y23 is the Proton acceptor of the active site. Substrate-binding residues include N75, H81, and D88. Residue H101 is the Proton donor of the active site. Substrate contacts are provided by residues 102-103 (LS) and R112.

The protein belongs to the type-II 3-dehydroquinase family. In terms of assembly, homododecamer.

It carries out the reaction 3-dehydroquinate = 3-dehydroshikimate + H2O. The protein operates within metabolic intermediate biosynthesis; chorismate biosynthesis; chorismate from D-erythrose 4-phosphate and phosphoenolpyruvate: step 3/7. Functionally, catalyzes a trans-dehydration via an enolate intermediate. This is 3-dehydroquinate dehydratase from Legionella pneumophila (strain Paris).